The chain runs to 380 residues: Kappa-type opioid receptor (380 aa).

Residues 1–57 (MESPIQIFRGEPGPTCAPSACLLPNSSSWFPNWAESDSNGSVGSEDQQLEPAHISPA) are Extracellular-facing. N25 and N39 each carry an N-linked (GlcNAc...) asparagine glycan. A helical transmembrane segment spans residues 58–85 (IPVIITAVYSVVFVVGLVGNSLVMFVII). Over 86 to 95 (RYTKMKTATN) the chain is Cytoplasmic. The helical transmembrane segment at 96–119 (IYIFNLALADALVTTTMPFQSAVY) threads the bilayer. Over 120–132 (LMNSWPFGDVLCK) the chain is Extracellular. The cysteines at positions 131 and 210 are disulfide-linked. The chain crosses the membrane as a helical span at residues 133–154 (IVISIDYYNMFTSIFTLTMMSV). The Cytoplasmic portion of the chain corresponds to 155–173 (DRYIAVCHPVKALDFRTPL). Residues 174-196 (KAKIINICIWLLASSVGISAIVL) form a helical membrane-spanning segment. Residues 197 to 222 (GGTKVREDVDVIECSLQFPDDEYSWW) lie on the Extracellular side of the membrane. The chain crosses the membrane as a helical span at residues 223–247 (DLFMKICVFVFAFVIPVLIIIVCYT). Residues 248–274 (LMILRLKSVRLLSGSREKDRNLRRITK) lie on the Cytoplasmic side of the membrane. Residues 275-296 (LVLVVVAVFIICWTPIHIFILV) form a helical membrane-spanning segment. Residues 297 to 311 (EALGSTSHSTAVLSS) are Extracellular-facing. Residues 312–333 (YYFCIALGYTNSSLNPVLYAFL) traverse the membrane as a helical segment. Topologically, residues 334-380 (DENFKRCFRDFCFPIKMRMERQSTNRVRNTVQDPASMRDVGGMNKPV) are cytoplasmic. C345 is lipidated: S-palmitoyl cysteine.

Belongs to the G-protein coupled receptor 1 family. In terms of assembly, interacts with NHERF1. Interacts with GABARAPL1.

It localises to the cell membrane. Its function is as follows. G-protein coupled opioid receptor that functions as a receptor for endogenous alpha-neoendorphins and dynorphins, but has low affinity for beta-endorphins. Also functions as a receptor for various synthetic opioids and for the psychoactive diterpene salvinorin A. Ligand binding causes a conformation change that triggers signaling via guanine nucleotide-binding proteins (G proteins) and modulates the activity of down-stream effectors, such as adenylate cyclase. Signaling leads to the inhibition of adenylate cyclase activity. Inhibits neurotransmitter release by reducing calcium ion currents and increasing potassium ion conductance. Plays a role in the perception of pain. Plays a role in mediating reduced physical activity upon treatment with synthetic opioids. Plays a role in the regulation of salivation in response to synthetic opioids. May play a role in arousal and regulation of autonomic and neuroendocrine functions. This Rattus norvegicus (Rat) protein is Kappa-type opioid receptor (Oprk1).